We begin with the raw amino-acid sequence, 469 residues long: Adenosylhomocysteinase (469 aa).

The substrate site is built by Thr63, Asp139, and Glu164. 165-167 (TTT) lines the NAD(+) pocket. 2 residues coordinate substrate: Lys194 and Asp198. Residues Asn199, 228–233 (GYGDVG), Glu251, Asn300, 321–323 (IGH), and Asn375 contribute to the NAD(+) site.

The protein belongs to the adenosylhomocysteinase family. The cofactor is NAD(+).

The protein localises to the cytoplasm. It catalyses the reaction S-adenosyl-L-homocysteine + H2O = L-homocysteine + adenosine. Its pathway is amino-acid biosynthesis; L-homocysteine biosynthesis; L-homocysteine from S-adenosyl-L-homocysteine: step 1/1. Functionally, may play a key role in the regulation of the intracellular concentration of adenosylhomocysteine. This chain is Adenosylhomocysteinase, found in Pseudomonas syringae pv. tomato (strain ATCC BAA-871 / DC3000).